Consider the following 68-residue polypeptide: Purkinje cell protein 4-like protein 1 (68 aa).

Residues 1-16 (MSELNTKTPPAANQAS) are compositionally biased toward polar residues. The tract at residues 1-42 (MSELNTKTPPAANQASDPEEKGKPGSIKKAEEEEEIDIDLTA) is disordered. A Phosphothreonine modification is found at T8. Positions 18–31 (PEEKGKPGSIKKAE) are enriched in basic and acidic residues. Residues 45 to 68 (TEKAALAIQGKFRRFQKRKKDSSS) enclose the IQ domain.

The protein belongs to the PCP4 family. In terms of tissue distribution, expressed in laminar and nuclear structures of the CNS.

This Mus musculus (Mouse) protein is Purkinje cell protein 4-like protein 1 (Pcp4l1).